A 323-amino-acid polypeptide reads, in one-letter code: Glyoxylate/hydroxypyruvate reductase HPR3 (323 aa).

NADP(+) contacts are provided by residues 160-163 (LGSI), 182-184 (SRS), and 238-240 (VGR). Catalysis depends on residues arginine 240 and glutamate 269. Residue histidine 287 is the Proton donor of the active site. 287–289 (HFA) is a binding site for NADP(+).

This sequence belongs to the D-isomer specific 2-hydroxyacid dehydrogenase family. GyaR subfamily. In terms of assembly, homodimer.

It carries out the reaction glycolate + NADP(+) = glyoxylate + NADPH + H(+). The catalysed reaction is (R)-glycerate + NADP(+) = 3-hydroxypyruvate + NADPH + H(+). Its activity is regulated as follows. Inhibited by oxalate. Catalyzes the NADPH-dependent reduction of glyoxylate and hydroxypyruvate (HP) into glycolate and glycerate. Mostly active in the presence of NADPH and glyoxylate. The sequence is that of Glyoxylate/hydroxypyruvate reductase HPR3 (HPR3) from Arabidopsis thaliana (Mouse-ear cress).